Reading from the N-terminus, the 403-residue chain is NADH-quinone oxidoreductase subunit D (403 aa).

This sequence belongs to the complex I 49 kDa subunit family. NDH-1 is composed of 15 different subunits. Subunits NuoB, C, D, E, F, and G constitute the peripheral sector of the complex.

Its subcellular location is the cell membrane. It catalyses the reaction a quinone + NADH + 5 H(+)(in) = a quinol + NAD(+) + 4 H(+)(out). In terms of biological role, NDH-1 shuttles electrons from NADH, via FMN and iron-sulfur (Fe-S) centers, to quinones in the respiratory chain. The immediate electron acceptor for the enzyme in this species is believed to be a menaquinone. Couples the redox reaction to proton translocation (for every two electrons transferred, four hydrogen ions are translocated across the cytoplasmic membrane), and thus conserves the redox energy in a proton gradient. This chain is NADH-quinone oxidoreductase subunit D, found in Deinococcus geothermalis (strain DSM 11300 / CIP 105573 / AG-3a).